The primary structure comprises 384 residues: S-adenosylmethionine synthase (384 aa).

Residue His-15 coordinates ATP. Asp-17 contributes to the Mg(2+) binding site. Glu-43 contacts K(+). Glu-56 and Gln-99 together coordinate L-methionine. Residues 99–109 (QSPDINQGVDR) are flexible loop. Residues 164-166 (DAK), 230-231 (RF), Asp-239, 245-246 (RK), Ala-262, and Lys-266 contribute to the ATP site. L-methionine is bound at residue Asp-239. Lys-270 serves as a coordination point for L-methionine.

This sequence belongs to the AdoMet synthase family. Homotetramer; dimer of dimers. The cofactor is Mg(2+). K(+) serves as cofactor.

It localises to the cytoplasm. It catalyses the reaction L-methionine + ATP + H2O = S-adenosyl-L-methionine + phosphate + diphosphate. It functions in the pathway amino-acid biosynthesis; S-adenosyl-L-methionine biosynthesis; S-adenosyl-L-methionine from L-methionine: step 1/1. In terms of biological role, catalyzes the formation of S-adenosylmethionine (AdoMet) from methionine and ATP. The overall synthetic reaction is composed of two sequential steps, AdoMet formation and the subsequent tripolyphosphate hydrolysis which occurs prior to release of AdoMet from the enzyme. The polypeptide is S-adenosylmethionine synthase (Photobacterium profundum (strain SS9)).